A 337-amino-acid chain; its full sequence is ERI1 exoribonuclease 3 (337 aa).

One can recognise an Exonuclease domain in the interval 146 to 320 (FLVLDFEATC…DDCKNIANIM (175 aa)). Residues aspartate 150, glutamate 152, and aspartate 249 each coordinate Mg(2+). Glutamate 152 functions as the Proton acceptor in the catalytic mechanism. An AMP-binding site is contributed by glutamate 152. The active-site Proton acceptor is the histidine 307. Histidine 307 is a binding site for AMP. Aspartate 312 contacts Mg(2+).

As to quaternary structure, interacts with PRNP. Requires Mg(2+) as cofactor. Highly expressed in the brain, heart, thyroid and testis. Expressed at low levels in the muscle cells, liver, pancreas and kidney.

The chain is ERI1 exoribonuclease 3 (Eri3) from Mus musculus (Mouse).